The chain runs to 313 residues: Proline iminopeptidase (313 aa).

Residues 35-298 (KPVVMLHGGP…SPASGHSAFE (264 aa)) form the AB hydrolase-1 domain. Catalysis depends on Ser110, which acts as the Nucleophile. Residue Asp266 is part of the active site. His294 functions as the Proton donor in the catalytic mechanism.

Belongs to the peptidase S33 family. In terms of assembly, homooligomer.

The protein localises to the cytoplasm. The catalysed reaction is Release of N-terminal proline from a peptide.. Functionally, may be involved in proline metabolism and sensitivity to ascamycin. Has ascamycin dealanylating activity. The sequence is that of Proline iminopeptidase (pip) from Xanthomonas citri (Xanthomonas campestris pv. citri).